A 330-amino-acid polypeptide reads, in one-letter code: Phenylalanine--tRNA ligase alpha subunit (330 aa).

Residue Glu255 participates in Mg(2+) binding.

This sequence belongs to the class-II aminoacyl-tRNA synthetase family. Phe-tRNA synthetase alpha subunit type 1 subfamily. Tetramer of two alpha and two beta subunits. Mg(2+) is required as a cofactor.

The protein resides in the cytoplasm. It catalyses the reaction tRNA(Phe) + L-phenylalanine + ATP = L-phenylalanyl-tRNA(Phe) + AMP + diphosphate + H(+). The protein is Phenylalanine--tRNA ligase alpha subunit of Acinetobacter baumannii (strain SDF).